A 77-amino-acid polypeptide reads, in one-letter code: MQVRAVLVLAVVALVAVATSRAQLNFTPWWGKRALGAPAAGDCVSASPQALLSILNAAQAEVQKLIDCSRFTSEANS.

Positions 1–22 (MQVRAVLVLAVVALVAVATSRA) are cleaved as a signal peptide. A Pyrrolidone carboxylic acid modification is found at glutamine 23. Tryptophan 30 carries the tryptophan amide modification.

This sequence belongs to the AKH/HRTH/RPCH family.

The protein resides in the secreted. Its function is as follows. This hormone, released from cells in the corpora cardiaca, causes release of diglycerides from the fat body and stimulation of muscles to use these diglycerides as an energy source during energy-demanding processes. This Locusta migratoria (Migratory locust) protein is Adipokinetic prohormone type 3.